The sequence spans 869 residues: Retrovirus-related Pol polyprotein from type-1 retrotransposable element R2 (869 aa).

Residues 199-475 enclose the Reverse transcriptase domain; sequence IFVFYGRVPS…DLWKYLGVVY (277 aa). The tract at residues 601-869 is nucleic acid-binding endonuclease; it reads LYASISHSCK…FNNVTTVVHW (269 aa).

The enzyme catalyses DNA(n) + a 2'-deoxyribonucleoside 5'-triphosphate = DNA(n+1) + diphosphate. This chain is Retrovirus-related Pol polyprotein from type-1 retrotransposable element R2, found in Bradysia coprophila (Dark-winged fungus gnat).